A 200-amino-acid chain; its full sequence is Phospholipase A2 inhibitor NAI (200 aa).

The first 19 residues, 1–19, serve as a signal peptide directing secretion; it reads MKSLLFCCLFGTFLATGMC. 8 disulfide bridges follow: Cys22-Cys46, Cys25-Cys32, Cys39-Cys67, Cys73-Cys94, Cys95-Cys100, Cys120-Cys145, Cys138-Cys165, and Cys171-Cys191.

The protein belongs to the CNF-like-inhibitor family. As to quaternary structure, heterotrimer of 2 subunits A and 1 subunit B; non-covalently linked. Expressed by the liver.

It is found in the secreted. Inhibits the enzymatic activity of all phospholipase A2 tested, binding with micromole to nanomole affinity. The sequence is that of Phospholipase A2 inhibitor NAI from Notechis ater (Black tiger snake).